Reading from the N-terminus, the 1117-residue chain is Protein ECM21 (1117 aa).

Disordered regions lie at residues 1-48 and 63-155; these read MPFI…RRSS and VHSP…YSQI. A compositionally biased stretch (polar residues) spans 11–34; it reads KNSSHSLSETDLNQSKGQPFQPSP. Ser18 is subject to Phosphoserine. Over residues 70–81 the composition is skewed to low complexity; it reads NNTTKGGNNNGN. At Ser115 the chain carries Phosphoserine. Low complexity predominate over residues 117–130; that stretch reads SDSATTTPRSSTSD. Ser140 bears the Phosphoserine mark. A Glycyl lysine isopeptide (Lys-Gly) (interchain with G-Cter in ubiquitin) cross-link involves residue Lys191. Disordered regions lie at residues 275–312 and 486–523; these read ATTA…ELNT and YRQD…AQAH. Ser286 carries the post-translational modification Phosphoserine. Low complexity predominate over residues 501-519; it reads SSSSLSSTTSSLKLTETES. Phosphoserine occurs at positions 527 and 550. Glycyl lysine isopeptide (Lys-Gly) (interchain with G-Cter in ubiquitin) cross-links involve residues Lys577, Lys651, and Lys712. Ser775 carries the post-translational modification Phosphoserine. Residues Lys794, Lys807, and Lys1024 each participate in a glycyl lysine isopeptide (Lys-Gly) (interchain with G-Cter in ubiquitin) cross-link. Disordered stretches follow at residues 1016–1065 and 1079–1117; these read RSRF…KDKQ and KDDE…SDEE. Polar residues predominate over residues 1027–1059; that stretch reads STPSPVNRSHNSSPTNGLSQANGTVRIPNATTE. Residue Ser1035 is modified to Phosphoserine. The span at 1089-1098 shows a compositional bias: low complexity; sequence SSSSADSLLS.

It belongs to the CSR2 family.

The protein localises to the cytoplasm. May be involved in cell wall organization and biogenesis. The protein is Protein ECM21 (ECM21) of Saccharomyces cerevisiae (strain ATCC 204508 / S288c) (Baker's yeast).